A 213-amino-acid polypeptide reads, in one-letter code: Thymidylate kinase (213 aa).

7-14 serves as a coordination point for ATP; it reads GMDGSGKT.

This sequence belongs to the thymidylate kinase family.

The catalysed reaction is dTMP + ATP = dTDP + ADP. Phosphorylation of dTMP to form dTDP in both de novo and salvage pathways of dTTP synthesis. This Mycoplasma capricolum subsp. capricolum (strain California kid / ATCC 27343 / NCTC 10154) protein is Thymidylate kinase.